A 70-amino-acid chain; its full sequence is Large ribosomal subunit protein bL32 (70 aa).

Basic residues predominate over residues Met1–His19. Positions Met1–Ala21 are disordered.

The protein belongs to the bacterial ribosomal protein bL32 family.

This Gluconobacter oxydans (strain 621H) (Gluconobacter suboxydans) protein is Large ribosomal subunit protein bL32.